The sequence spans 823 residues: Protein Jade-3 (823 aa).

The segment at 1–40 is disordered; it reads MKRHRPVSSSESSDECPSTSFTSSSMYRKKSKNPKEQKKS. The span at 8 to 20 shows a compositional bias: low complexity; that stretch reads SSSESSDECPSTS. N6-acetyllysine occurs at positions 30, 32, and 35. A PHD-type 1 zinc finger spans residues 200–250; that stretch reads DVICDVCRSPDSEEGNDMVFCDKCNVCVHQACYGILKIPEGSWLCRSCVLG. A C2HC pre-PHD-type zinc finger spans residues 252–286; it reads YPQCVLCPKKGGAMKTTRTGTKWAHVSCALWIPEV. The segment at 310-366 adopts a PHD-type 2 zinc-finger fold; the sequence is LVCNLCKLKTGACIQCSVKSCITAFHVTCAFEHGLEMKTILDEGDEVKFKSFCLKHS. 2 disordered regions span residues 543 to 585 and 601 to 631; these read LKMP…PEEP and KSNC…AEFY. Residues 549-562 are compositionally biased toward basic and acidic residues; sequence TSEDCKDSSTETEH. 2 positions are modified to phosphoserine: Ser566 and Ser578. Residue Lys601 is modified to N6-acetyllysine. At Ser608 the chain carries Phosphoserine. Lys638 bears the N6-acetyllysine mark. The interval 651 to 676 is disordered; sequence SIGNGKNQPNSRVSSSNGLEGNWSGN. At Lys735 the chain carries N6-acetyllysine. The tract at residues 756–823 is disordered; sequence TGRASYQETD…HPHSHSSMQR (68 aa). A phosphoserine mark is found at Ser774 and Ser776. The segment covering 781–809 has biased composition (basic and acidic residues); it reads EGSKETPRVKRESSDRENPSHDSARECHG.

This sequence belongs to the JADE family. Component of the HBO1 complex composed at least of ING4 or ING5, MYST2/HBO1, MEAF6, and one of JADE1, JADE2 and JADE3.

Functionally, scaffold subunit of some HBO1 complexes, which have a histone H4 acetyltransferase activity. The protein is Protein Jade-3 (Jade3) of Mus musculus (Mouse).